The chain runs to 1022 residues: rDNA transcriptional regulator POL5 (1022 aa).

Composition is skewed to acidic residues over residues 706–719, 728–748, and 781–802; these read EEFEEIKEENDASE, SESESESDSDDADEKDEEDEA, and DLDQLEGLSDDGGDDEDEESMD. Disordered stretches follow at residues 706–748 and 778–805; these read EEFE…EDEA and GEVDLDQLEGLSDDGGDDEDEESMDDEK. The residue at position 789 (S789) is a Phosphoserine.

Belongs to the MYBBP1A family. In terms of assembly, interacts with FRK1.

It localises to the nucleus. The protein localises to the nucleolus. The enzyme catalyses DNA(n) + a 2'-deoxyribonucleoside 5'-triphosphate = DNA(n+1) + diphosphate. With respect to regulation, stimulated by PCNA and inhibited by aphidicolin. Its function is as follows. Plays an important role in the regulation of rRNA transcription. Binds near or at the enhancer region of rRNA repeating units. May have DNA polymerase activity, but it is not required for in vivo function. In Saccharomyces cerevisiae (strain ATCC 204508 / S288c) (Baker's yeast), this protein is rDNA transcriptional regulator POL5.